A 1012-amino-acid chain; its full sequence is RNA-binding protein 26 (1012 aa).

A Glycyl lysine isopeptide (Lys-Gly) (interchain with G-Cter in SUMO2) cross-link involves residue Lys-94. A coiled-coil region spans residues 98-127 (LQHQEKDIKKEELTKEEEREKKFSRRLNHS). Residue Lys-106 forms a Glycyl lysine isopeptide (Lys-Gly) (interchain with G-Cter in SUMO1); alternate linkage. Lys-106 is covalently cross-linked (Glycyl lysine isopeptide (Lys-Gly) (interchain with G-Cter in SUMO2); alternate). Residues 106 to 118 (KKEELTKEEEREK) show a composition bias toward basic and acidic residues. The tract at residues 106–236 (KKEELTKEEE…PLENNYTPVS (131 aa)) is disordered. A Phosphoserine modification is found at Ser-127. Residues 134–168 (RYRDNRSRDERKKDDRSRKRDYDRNPPRRDSYRDR) are compositionally biased toward basic and acidic residues. Residues 169–186 (YNRRRGRSRSYSRSRSRS) show a composition bias toward basic residues. 2 stretches are compositionally biased toward basic and acidic residues: residues 187–201 (WSKE…DRSR) and 209–227 (RSRE…RTDP). The C3H1-type zinc finger occupies 288 to 316 (PMPKKRCRDYDEKGFCMRGDMCPFDHGSD). Positions 334 to 388 (QPPVVEGPPPPGLPPPPPILTPPPVNLRPPVPPPGPLPPSLPPVTGPPPPLPPLQ) are enriched in pro residues. Disordered stretches follow at residues 334 to 404 (QPPV…SSVP) and 465 to 520 (IGLT…NFNR). A compositionally biased stretch (low complexity) spans 394–404 (APPNSATSSVP). Residue Ser-501 is modified to Phosphoserine. The residue at position 515 (Lys-515) is an N6-acetyllysine. The residue at position 523 (Ser-523) is a Phosphoserine. An RRM 1 domain is found at 537–611 (TKLELRKVPP…RFIKVYWHRE (75 aa)). At Ser-621 the chain carries Phosphoserine. The disordered stretch occupies residues 647 to 667 (PVPSATTEPAEAQSATSELPQ). Coiled-coil stretches lie at residues 724–800 (DNNE…KSTS) and 828–852 (KKMQ…EAAK). Residues 858-889 (SGRGRGIHTRGRGTAHGRGRGRGRGRGVPGHA) are disordered. Basic residues predominate over residues 862 to 882 (RGIHTRGRGTAHGRGRGRGRG). Residues 896 to 965 (RALEISAFTE…QDLKLAWNKP (70 aa)) form the RRM 2 domain. A disordered region spans residues 970–1012 (SAVDTEEAEPDEEEFQEESLVDDSLLQDDDEEEEDNESRSWRR). Residues 973–1005 (DTEEAEPDEEEFQEESLVDDSLLQDDDEEEEDN) are compositionally biased toward acidic residues.

In terms of tissue distribution, expressed in testis and ovary.

May be involved in the turnover of nuclear polyadenylated (pA+) RNA. In Mus musculus (Mouse), this protein is RNA-binding protein 26.